A 1486-amino-acid chain; its full sequence is Chromosome partition protein MukB (1486 aa).

34–41 contributes to the ATP binding site; sequence GGNGAGKS. Coiled coils occupy residues 326–418, 444–480, and 509–603; these read LEAD…QYNQ, LETFQAKELEATEKMLSLEQKMSMAQTAHSQFEQAYQ, and RHLA…RAPV. The flexible hinge stretch occupies residues 666 to 783; that stretch reads PGGSEDQRLN…EVPLFGRAAR (118 aa). Coiled-coil stretches lie at residues 835 to 923, 977 to 1115, and 1209 to 1265; these read EAEI…AKLE, EMLS…TAKA, and VEAI…LQSV.

This sequence belongs to the SMC family. MukB subfamily. In terms of assembly, homodimerization via its hinge domain. Binds to DNA via its C-terminal region. Interacts, and probably forms a ternary complex, with MukE and MukF via its C-terminal region. The complex formation is stimulated by calcium or magnesium. Interacts with tubulin-related protein FtsZ.

The protein localises to the cytoplasm. It localises to the nucleoid. Plays a central role in chromosome condensation, segregation and cell cycle progression. Functions as a homodimer, which is essential for chromosome partition. Involved in negative DNA supercoiling in vivo, and by this means organize and compact chromosomes. May achieve or facilitate chromosome segregation by condensation DNA from both sides of a centrally located replisome during cell division. In Escherichia coli O7:K1 (strain IAI39 / ExPEC), this protein is Chromosome partition protein MukB.